We begin with the raw amino-acid sequence, 256 residues long: Ribonuclease HII (256 aa).

Residues 72-256 (ALICGIDEVG…TFEPIKSLVN (185 aa)) form the RNase H type-2 domain. 3 residues coordinate a divalent metal cation: Asp78, Glu79, and Asp170.

It belongs to the RNase HII family. Requires Mn(2+) as cofactor. Mg(2+) is required as a cofactor.

Its subcellular location is the cytoplasm. The catalysed reaction is Endonucleolytic cleavage to 5'-phosphomonoester.. Functionally, endonuclease that specifically degrades the RNA of RNA-DNA hybrids. The sequence is that of Ribonuclease HII from Staphylococcus saprophyticus subsp. saprophyticus (strain ATCC 15305 / DSM 20229 / NCIMB 8711 / NCTC 7292 / S-41).